Consider the following 227-residue polypeptide: MSINLDNEELKNEDLVANMRKDYRMGELKEEGLLESPFKMFDMWLTQEIELKNEGAEPNAFTLATCSIERKPSARVVLLKHFDHQGFVFYTNYNSRKSKELSENPFASMTFLWTQKQVRIEGSVEKVDRLESEKYFKSRPRSSQIGAWVSEFQSSEVTKQHLEEKTIEMENKFKDQEVPLPPFWGGWRIKPYAFEFWQGKSGRIHDRFKYVPTDSNNDNWITKRLSP.

A pyridoxal 5'-phosphate-binding site is contributed by 20-23; it reads RKDY. 75-78 serves as a coordination point for FMN; that stretch reads RVVL. Lysine 80 lines the pyridoxal 5'-phosphate pocket. FMN-binding positions include 90–91, 96–97, and glutamine 117; these read YT and RK. Pyridoxal 5'-phosphate-binding residues include tyrosine 135, arginine 139, and serine 143. FMN is bound by residues 152 to 153 and tryptophan 197; that span reads FQ. 203 to 205 is a binding site for pyridoxal 5'-phosphate; the sequence is RIH. Residue arginine 207 participates in FMN binding.

It belongs to the pyridoxamine 5'-phosphate oxidase family. In terms of assembly, homodimer. FMN is required as a cofactor.

The enzyme catalyses pyridoxamine 5'-phosphate + O2 + H2O = pyridoxal 5'-phosphate + H2O2 + NH4(+). It catalyses the reaction pyridoxine 5'-phosphate + O2 = pyridoxal 5'-phosphate + H2O2. The protein operates within cofactor metabolism; pyridoxal 5'-phosphate salvage; pyridoxal 5'-phosphate from pyridoxamine 5'-phosphate: step 1/1. It participates in cofactor metabolism; pyridoxal 5'-phosphate salvage; pyridoxal 5'-phosphate from pyridoxine 5'-phosphate: step 1/1. Catalyzes the oxidation of either pyridoxine 5'-phosphate (PNP) or pyridoxamine 5'-phosphate (PMP) into pyridoxal 5'-phosphate (PLP). The sequence is that of Pyridoxine-5'-phosphate oxidase (pnpo) from Dictyostelium discoideum (Social amoeba).